The primary structure comprises 279 residues: Inhibitor of growth protein 1 (279 aa).

Residues 115–206 (AHQDISDGTG…EASPADLPID (92 aa)) form a disordered region. Residue Lys135 forms a Glycyl lysine isopeptide (Lys-Gly) (interchain with G-Cter in SUMO2) linkage. The segment covering 154–171 (RNNENRENASNNHDHDDI) has biased composition (basic and acidic residues). Positions 179-191 (KKAKTSKKKKRSK) are enriched in basic residues. The PHD-type zinc finger occupies 210–259 (PTYCLCNQVSYGEMIGCDNDECPIEWFHFSCVGLNHKPKGKWYCPKCRGE). The Zn(2+) site is built by Cys213, Cys215, Cys226, Cys231, His237, Cys240, Cys253, and Cys256. A PBR region spans residues 262 to 279 (KTMDKALEKSKKERAYNR).

Belongs to the ING family. As to quaternary structure, interacts with H3K4me3 and to a lesser extent with H3K4me2. Isoform 2 interacts with RSL1D1. As to expression, in the adult, widely expressed with highest levels in thymus and testis.

The protein localises to the nucleus. In terms of biological role, isoform 1 inhibits p53-dependent transcriptional activation and may function as an oncoprotein. Isoform 2 acts as a negative growth regulator by cooperating with p53 in transcriptional activation of p53-responsive genes and may act as a tumor suppressor. This chain is Inhibitor of growth protein 1 (Ing1), found in Mus musculus (Mouse).